We begin with the raw amino-acid sequence, 342 residues long: Adenylate isopentenyltransferase 6, chloroplastic (342 aa).

The transit peptide at 1–33 directs the protein to the chloroplast; that stretch reads MQQLMTLLSPPLSHSSLLPTVTTKFGSPRLVTT. Residue 52-59 participates in ATP binding; that stretch reads GTTGTGKS.

It belongs to the IPP transferase family. As to expression, expressed in siliques, at the mRNA level.

The protein resides in the plastid. It localises to the chloroplast. The enzyme catalyses dimethylallyl diphosphate + ADP = N(6)-(dimethylallyl)adenosine 5'-diphosphate + diphosphate. The catalysed reaction is dimethylallyl diphosphate + ATP = N(6)-(dimethylallyl)adenosine 5'-triphosphate + diphosphate. Its function is as follows. Involved in cytokinin biosynthesis. Catalyzes the transfer of an isopentenyl group from dimethylallyl diphosphate (DMAPP) to ATP and ADP. In Arabidopsis thaliana (Mouse-ear cress), this protein is Adenylate isopentenyltransferase 6, chloroplastic (IPT6).